The chain runs to 256 residues: Imidazole glycerol phosphate synthase subunit hisF1 (256 aa).

Active-site residues include Asp-12 and Asp-131.

This sequence belongs to the HisA/HisF family. Heterodimer of HisH and HisF.

The protein resides in the cytoplasm. It carries out the reaction 5-[(5-phospho-1-deoxy-D-ribulos-1-ylimino)methylamino]-1-(5-phospho-beta-D-ribosyl)imidazole-4-carboxamide + L-glutamine = D-erythro-1-(imidazol-4-yl)glycerol 3-phosphate + 5-amino-1-(5-phospho-beta-D-ribosyl)imidazole-4-carboxamide + L-glutamate + H(+). It participates in amino-acid biosynthesis; L-histidine biosynthesis; L-histidine from 5-phospho-alpha-D-ribose 1-diphosphate: step 5/9. Functionally, IGPS catalyzes the conversion of PRFAR and glutamine to IGP, AICAR and glutamate. The HisF subunit catalyzes the cyclization activity that produces IGP and AICAR from PRFAR using the ammonia provided by the HisH subunit. This Pseudomonas aeruginosa (strain ATCC 15692 / DSM 22644 / CIP 104116 / JCM 14847 / LMG 12228 / 1C / PRS 101 / PAO1) protein is Imidazole glycerol phosphate synthase subunit hisF1 (hisF1).